The sequence spans 124 residues: Small ribosomal subunit protein uS12 (124 aa).

The segment at 1-25 is disordered; that stretch reads MARINQLVRKPRRARAKKSDVPALE. Aspartate 89 is modified (3-methylthioaspartic acid). Residues 103–124 are disordered; the sequence is DTAGVSGRRRGRSKYGEKKPKE.

The protein belongs to the universal ribosomal protein uS12 family. Part of the 30S ribosomal subunit. Contacts proteins S8 and S17. May interact with IF1 in the 30S initiation complex.

Its function is as follows. With S4 and S5 plays an important role in translational accuracy. In terms of biological role, interacts with and stabilizes bases of the 16S rRNA that are involved in tRNA selection in the A site and with the mRNA backbone. Located at the interface of the 30S and 50S subunits, it traverses the body of the 30S subunit contacting proteins on the other side and probably holding the rRNA structure together. The combined cluster of proteins S8, S12 and S17 appears to hold together the shoulder and platform of the 30S subunit. This is Small ribosomal subunit protein uS12 from Coxiella burnetii (strain Dugway 5J108-111).